A 539-amino-acid chain; its full sequence is Nucleoporin NUP60 (539 aa).

Phosphoserine is present on residues Ser10, Ser49, Ser81, and Ser89. A disordered region spans residues 44–80; it reads DSARVSPRNNVANKQPRNESFNRRISSMPGGYFHSEI. Residues 91–118 adopt a coiled-coil conformation; sequence VVSAVGEARNDIENKEEEYDETHETNIS. Phosphoserine occurs at positions 162, 171, 214, and 222. Polar residues-rich tracts occupy residues 242 to 252 and 258 to 267; these read TANTSAQSIAS and SGVSKSAPSK. 3 disordered regions span residues 242–267, 305–329, and 347–493; these read TANT…APSK, IRKH…TTVK, and NATK…GKHI. Polar residues predominate over residues 347–359; sequence NATKISPSAPSKD. Phosphoserine is present on residues Ser352, Ser360, Ser374, and Ser382. Polar residues-rich tracts occupy residues 395–433 and 448–485; these read SAFN…TNLQ and GDST…LSQE. 2 FXF repeats span residues 399–401 and 427–429; these read FSF and FNF. The residue at position 460 (Thr460) is a Phosphothreonine. An FXF 3 repeat occupies 469 to 471; the sequence is FVF. 2 positions are modified to phosphoserine: Ser480 and Ser483. Residues 509 to 511 form an FXF 4 repeat; sequence FDF.

Component of the nuclear pore complex (NPC). NPC constitutes the exclusive means of nucleocytoplasmic transport. NPCs allow the passive diffusion of ions and small molecules and the active, nuclear transport receptor-mediated bidirectional transport of macromolecules such as proteins, RNAs, ribonucleoparticles (RNPs), and ribosomal subunits across the nuclear envelope. Due to its 8-fold rotational symmetry, all subunits are present with 8 copies or multiples thereof. Binds to NUP1 and NUP2 forming the nuclear basket and the distal ring. The interaction with NUP2 is GSP1-GTP-dependent. Interacts through its FG repeats with karyopherins, such as KAP123 and KAP95-SRP1 (KAP60). Also interacts with GSP1-GTP and SRM1 (PRP20), where NUP60 reduces SRM1 activity, thus inhibiting GSP1 guanine nucleotide dissociation. Phosphorylated by CDC28.

The protein localises to the nucleus. The protein resides in the nuclear pore complex. It is found in the nucleus membrane. Its function is as follows. Functions as a component of the nuclear pore complex (NPC). NPC components, collectively referred to as nucleoporins (NUPs), can play the role of both NPC structural components and of docking or interaction partners for transiently associated nuclear transport factors. Active directional transport is assured by both, a Phe-Gly (FG) repeat affinity gradient for these transport factors across the NPC and a transport cofactor concentration gradient across the nuclear envelope (GSP1 and GSP2 GTPases associated predominantly with GTP in the nucleus, with GDP in the cytoplasm). This is Nucleoporin NUP60 (NUP60) from Saccharomyces cerevisiae (strain ATCC 204508 / S288c) (Baker's yeast).